Here is a 320-residue protein sequence, read N- to C-terminus: Methionyl-tRNA formyltransferase (320 aa).

Residue 114–117 coordinates (6S)-5,6,7,8-tetrahydrofolate; sequence SLLP.

It belongs to the Fmt family.

It catalyses the reaction L-methionyl-tRNA(fMet) + (6R)-10-formyltetrahydrofolate = N-formyl-L-methionyl-tRNA(fMet) + (6S)-5,6,7,8-tetrahydrofolate + H(+). In terms of biological role, attaches a formyl group to the free amino group of methionyl-tRNA(fMet). The formyl group appears to play a dual role in the initiator identity of N-formylmethionyl-tRNA by promoting its recognition by IF2 and preventing the misappropriation of this tRNA by the elongation apparatus. The chain is Methionyl-tRNA formyltransferase from Acinetobacter baumannii (strain ACICU).